Here is a 527-residue protein sequence, read N- to C-terminus: Phosphoenolpyruvate carboxykinase (ATP) (527 aa).

3 residues coordinate substrate: Arg-56, Tyr-191, and Lys-197. ATP is bound by residues Lys-197, His-216, and 232–240; that span reads GLSGTGKTT. The Mn(2+) site is built by Lys-197 and His-216. Asp-253 serves as a coordination point for Mn(2+). ATP is bound by residues Glu-281, Arg-318, 437–438, and Thr-443; that span reads RI. Residue Arg-318 participates in substrate binding.

It belongs to the phosphoenolpyruvate carboxykinase (ATP) family. The cofactor is Mn(2+).

The protein resides in the cytoplasm. The enzyme catalyses oxaloacetate + ATP = phosphoenolpyruvate + ADP + CO2. It functions in the pathway carbohydrate biosynthesis; gluconeogenesis. Its function is as follows. Involved in the gluconeogenesis. Catalyzes the conversion of oxaloacetate (OAA) to phosphoenolpyruvate (PEP) through direct phosphoryl transfer between the nucleoside triphosphate and OAA. The chain is Phosphoenolpyruvate carboxykinase (ATP) from Shouchella clausii (strain KSM-K16) (Alkalihalobacillus clausii).